The sequence spans 134 residues: Methylglyoxal synthase (134 aa).

In terms of domain architecture, MGS-like spans 1–134 (MNIALIAHDN…DWRERVKERG (134 aa)). Substrate is bound by residues H8, K12, 34–37 (TGTT), and 54–55 (SG). Residue D60 is the Proton donor/acceptor of the active site. H87 is a substrate binding site.

This sequence belongs to the methylglyoxal synthase family.

It carries out the reaction dihydroxyacetone phosphate = methylglyoxal + phosphate. Its function is as follows. Catalyzes the formation of methylglyoxal from dihydroxyacetone phosphate. The chain is Methylglyoxal synthase from Alkaliphilus metalliredigens (strain QYMF).